The chain runs to 1197 residues: DExH-box ATP-dependent RNA helicase DExH3 (1197 aa).

A Helicase ATP-binding domain is found at 309–476 (LKAIAANQVV…FGGAPAMHIP (168 aa)). An ATP-binding site is contributed by 322 to 329 (GETGCGKT). A DEIH box motif is present at residues 423–426 (DEIH). Residues 564–738 (LIENVLCHIV…SLCLQIKSLG (175 aa)) enclose the Helicase C-terminal domain.

It belongs to the DExH box helicase family.

The enzyme catalyses ATP + H2O = ADP + phosphate + H(+). This Arabidopsis thaliana (Mouse-ear cress) protein is DExH-box ATP-dependent RNA helicase DExH3.